The sequence spans 353 residues: L-tryptophan dehydrogenase (353 aa).

Residue R44 coordinates NAD(+). The Proton donor/acceptor role is filled by K80. NAD(+) contacts are provided by residues D114, T146, 176 to 181, K204, and 255 to 257; these read GLGNVG and AAN.

The protein belongs to the Glu/Leu/Phe/Val dehydrogenases family. In terms of assembly, homodimer.

It carries out the reaction L-tryptophan + NAD(+) + H2O = indole-3-pyruvate + NH4(+) + NADH + H(+). Its function is as follows. Catalyzes the reversible oxidative deamination of L-tryptophan to indole-3-pyruvate in the presence of NAD(+). Cannot use other L-amino acids and D-Trp. Involved in the biosynthesis of scytonemin, a cyanobacterial radiation-absorbing pigment. This is L-tryptophan dehydrogenase from Nostoc punctiforme (strain ATCC 29133 / PCC 73102).